The following is a 563-amino-acid chain: Sulfite reductase [NADPH] hemoprotein beta-component (563 aa).

4 residues coordinate [4Fe-4S] cluster: Cys427, Cys433, Cys472, and Cys476. Cys476 is a binding site for siroheme.

This sequence belongs to the nitrite and sulfite reductase 4Fe-4S domain family. In terms of assembly, alpha(8)-beta(8). The alpha component is a flavoprotein, the beta component is a hemoprotein. The cofactor is siroheme. It depends on [4Fe-4S] cluster as a cofactor.

It carries out the reaction hydrogen sulfide + 3 NADP(+) + 3 H2O = sulfite + 3 NADPH + 4 H(+). Its pathway is sulfur metabolism; hydrogen sulfide biosynthesis; hydrogen sulfide from sulfite (NADPH route): step 1/1. Component of the sulfite reductase complex that catalyzes the 6-electron reduction of sulfite to sulfide. This is one of several activities required for the biosynthesis of L-cysteine from sulfate. The polypeptide is Sulfite reductase [NADPH] hemoprotein beta-component (Shewanella frigidimarina (strain NCIMB 400)).